A 296-amino-acid polypeptide reads, in one-letter code: Nitrogenase iron protein (296 aa).

12-19 contacts ATP; that stretch reads GKGGIGKS. C100 contributes to the [4Fe-4S] cluster binding site. Position 103 is an ADP-ribosylarginine; by dinitrogenase reductase ADP-ribosyltransferase (R103). Position 134 (C134) interacts with [4Fe-4S] cluster.

It belongs to the NifH/BchL/ChlL family. As to quaternary structure, homodimer. The cofactor is [4Fe-4S] cluster. The reversible ADP-ribosylation of Arg-103 inactivates the nitrogenase reductase and regulates nitrogenase activity.

The catalysed reaction is N2 + 8 reduced [2Fe-2S]-[ferredoxin] + 16 ATP + 16 H2O = H2 + 8 oxidized [2Fe-2S]-[ferredoxin] + 2 NH4(+) + 16 ADP + 16 phosphate + 6 H(+). The key enzymatic reactions in nitrogen fixation are catalyzed by the nitrogenase complex, which has 2 components: the iron protein and the molybdenum-iron protein. This chain is Nitrogenase iron protein, found in Acidithiobacillus ferrooxidans (strain ATCC 23270 / DSM 14882 / CIP 104768 / NCIMB 8455) (Ferrobacillus ferrooxidans (strain ATCC 23270)).